We begin with the raw amino-acid sequence, 228 residues long: UPF0173 metal-dependent hydrolase lmo1577 (228 aa).

Belongs to the UPF0173 family.

The protein is UPF0173 metal-dependent hydrolase lmo1577 of Listeria monocytogenes serovar 1/2a (strain ATCC BAA-679 / EGD-e).